The chain runs to 614 residues: Sorting nexin-18 (614 aa).

One can recognise an SH3 domain in the interval 1-61; sequence MALRARALYD…PASYVQVIRA (61 aa). The disordered stretch occupies residues 85-218; it reads GFEPLPAAPP…SQELGHGEPQ (134 aa). A compositionally biased stretch (pro residues) spans 90–101; sequence PAAPPAAFPPLL. Residues 141–151 show a composition bias toward acidic residues; it reads SDDDWDDEWDD. The region spanning 266–376 is the PX domain; that stretch reads FQCTIDDPTK…HFLTCPSSTD (111 aa). A 1,2-diacyl-sn-glycero-3-phospho-(1D-myo-inositol-4,5-bisphosphate) is bound by residues R302, K304, and R342. The BAR domain occupies 411–614; sequence LQEVESKIDG…EEALHKYDSV (204 aa).

This sequence belongs to the sorting nexin family. Heterodimer with SNX9. Interacts with ITCH. Interacts with dynamin-2 (DNM2), SYNJ1 and WASL. Interacts with the AP-1 complex. Interacts with FCHSD1 (via the F-BAR domain).

It localises to the endomembrane system. It is found in the endosome membrane. The protein resides in the recycling endosome membrane. The protein localises to the cell membrane. Its subcellular location is the cytoplasmic vesicle membrane. In terms of biological role, involved in endocytosis and intracellular vesicle trafficking, both during interphase and at the end of mitosis. Required for efficient progress through mitosis and cytokinesis. Required for normal formation of the cleavage furrow at the end of mitosis. Plays a role in endocytosis via clathrin-coated pits, but also clathrin-independent, actin-dependent fluid-phase endocytosis. Plays a role in macropinocytosis. Binds to membranes enriched in phosphatidylinositol 4,5-bisphosphate and promotes membrane tubulation. Stimulates the GTPase activity of DNM2. Promotes DNM2 location at the plasma membrane. Together with DNM2, involved in autophagosome assembly by regulating trafficking from recycling endosomes of phospholipid scramblase ATG9A. This chain is Sorting nexin-18, found in Mus musculus (Mouse).